Here is a 507-residue protein sequence, read N- to C-terminus: Lysine--tRNA ligase (507 aa).

Glutamate 406 and glutamate 413 together coordinate Mg(2+).

It belongs to the class-II aminoacyl-tRNA synthetase family. In terms of assembly, homodimer. Requires Mg(2+) as cofactor.

Its subcellular location is the cytoplasm. It catalyses the reaction tRNA(Lys) + L-lysine + ATP = L-lysyl-tRNA(Lys) + AMP + diphosphate. The chain is Lysine--tRNA ligase from Wolinella succinogenes (strain ATCC 29543 / DSM 1740 / CCUG 13145 / JCM 31913 / LMG 7466 / NCTC 11488 / FDC 602W) (Vibrio succinogenes).